Reading from the N-terminus, the 479-residue chain is Type I inositol polyphosphate 5-phosphatase 8 (479 aa).

Catalytic regions lie at residues 300–315 (DKVIWLGDLNYRLRAS) and 379–394 (KRRTPAWCDRILWKGD).

Belongs to the inositol polyphosphate 5-phosphatase family.

The polypeptide is Type I inositol polyphosphate 5-phosphatase 8 (Arabidopsis thaliana (Mouse-ear cress)).